We begin with the raw amino-acid sequence, 640 residues long: Protein cereblon (640 aa).

The segment covering 1–11 (MDDEETAEIDE) has biased composition (acidic residues). Disordered stretches follow at residues 1 to 25 (MDDE…ELGP) and 92 to 159 (REDP…EAVP). Low complexity predominate over residues 113 to 137 (QPAQQEEQASLPYDSPSRASISSRH). A Lon N-terminal domain is found at 278–506 (RMLIFMHQHI…IIDTTLKQES (229 aa)). Residues 505–614 (ESLFYCRYCN…LAGSSVRIGK (110 aa)) enclose the CULT domain. Zn(2+) is bound by residues Cys-510, Cys-513, Cys-579, and Cys-582.

It belongs to the CRBN family. Likely a component of a DCX (DDB1-CUL4-X-box) protein ligase complex. May interact with pic/DDB1. In terms of processing, ubiquitinated.

It is found in the nucleus. It participates in protein modification; protein ubiquitination. Functionally, substrate recognition component of a DCX (DDB1-CUL4-X-box) E3 protein ligase complex that mediates the ubiquitination and subsequent proteasomal degradation of target proteins. Has an essential role in mediating growth by negatively regulating insulin signaling. It also has a role in maintaining presynaptic function in the neuromuscular junction synapses of third-instar larvae. The chain is Protein cereblon from Drosophila virilis (Fruit fly).